The sequence spans 158 residues: 2-C-methyl-D-erythritol 2,4-cyclodiphosphate synthase (158 aa).

Residues Asp-9 and His-11 each coordinate a divalent metal cation. 4-CDP-2-C-methyl-D-erythritol 2-phosphate-binding positions include 9 to 11 (DVH) and 35 to 36 (HS). His-43 provides a ligand contact to a divalent metal cation. 4-CDP-2-C-methyl-D-erythritol 2-phosphate-binding positions include 57–59 (DIG), 62–66 (FPDTD), 133–136 (TTTE), Phe-140, and Arg-143.

Belongs to the IspF family. Homotrimer. Requires a divalent metal cation as cofactor.

The enzyme catalyses 4-CDP-2-C-methyl-D-erythritol 2-phosphate = 2-C-methyl-D-erythritol 2,4-cyclic diphosphate + CMP. It participates in isoprenoid biosynthesis; isopentenyl diphosphate biosynthesis via DXP pathway; isopentenyl diphosphate from 1-deoxy-D-xylulose 5-phosphate: step 4/6. Involved in the biosynthesis of isopentenyl diphosphate (IPP) and dimethylallyl diphosphate (DMAPP), two major building blocks of isoprenoid compounds. Catalyzes the conversion of 4-diphosphocytidyl-2-C-methyl-D-erythritol 2-phosphate (CDP-ME2P) to 2-C-methyl-D-erythritol 2,4-cyclodiphosphate (ME-CPP) with a corresponding release of cytidine 5-monophosphate (CMP). This chain is 2-C-methyl-D-erythritol 2,4-cyclodiphosphate synthase, found in Haemophilus influenzae (strain PittGG).